A 413-amino-acid chain; its full sequence is Large ribosomal subunit protein uL4 (413 aa).

An N-acetylalanine modification is found at Ala2. Lys14 carries the N6-acetyllysine modification. Arg97 carries the post-translational modification Omega-N-methylarginine. Lys106 bears the N6-acetyllysine mark. A Glycyl lysine isopeptide (Lys-Gly) (interchain with G-Cter in SUMO2) cross-link involves residue Lys239. The residue at position 259 (Lys259) is an N6-acetyllysine. Position 266 is a phosphothreonine (Thr266). Phosphoserine occurs at positions 290 and 295. At Arg300 the chain carries Citrulline. Residue Lys327 forms a Glycyl lysine isopeptide (Lys-Gly) (interchain with G-Cter in SUMO2) linkage. Position 333 is an N6-acetyllysine (Lys333). The interval 355 to 413 (AAALAAKSDPKEAPAKKKPVVGKKKKPVVGRKAAAAKKPAADKKAADKRAGPEDKKPAA) is disordered. Lys361 bears the N6-acetyllysine; alternate mark. A Glycyl lysine isopeptide (Lys-Gly) (interchain with G-Cter in SUMO1); alternate cross-link involves residue Lys361. A Phosphoserine modification is found at Ser362. Positions 370-383 (KKKPVVGKKKKPVV) are enriched in basic residues. The segment covering 393 to 413 (PAADKKAADKRAGPEDKKPAA) has biased composition (basic and acidic residues).

The protein belongs to the universal ribosomal protein uL4 family. Component of the large ribosomal subunit. May bind IPO9 with low affinity. Interacts with RBM3. Post-translationally, citrullinated by PADI4.

It localises to the cytoplasm. In terms of biological role, component of the large ribosomal subunit. The ribosome is a large ribonucleoprotein complex responsible for the synthesis of proteins in the cell. The chain is Large ribosomal subunit protein uL4 (RPL4) from Oryctolagus cuniculus (Rabbit).